Here is a 263-residue protein sequence, read N- to C-terminus: Small ribosomal subunit protein eS4 (263 aa).

The S4 RNA-binding domain maps to 42 to 105 (LPLIIFLRNR…GENFRLIYDV (64 aa)).

Belongs to the eukaryotic ribosomal protein eS4 family. In terms of assembly, component of the small ribosomal subunit. Part of the small subunit (SSU) processome, composed of more than 70 proteins and the RNA chaperone small nucleolar RNA (snoRNA) U3.

The protein localises to the cytoplasm. Its subcellular location is the nucleus. It localises to the nucleolus. In terms of biological role, component of the small ribosomal subunit. The ribosome is a large ribonucleoprotein complex responsible for the synthesis of proteins in the cell. Part of the small subunit (SSU) processome, first precursor of the small eukaryotic ribosomal subunit. During the assembly of the SSU processome in the nucleolus, many ribosome biogenesis factors, an RNA chaperone and ribosomal proteins associate with the nascent pre-rRNA and work in concert to generate RNA folding, modifications, rearrangements and cleavage as well as targeted degradation of pre-ribosomal RNA by the RNA exosome. The sequence is that of Small ribosomal subunit protein eS4 (rps4x) from Danio rerio (Zebrafish).